The sequence spans 374 residues: Putative F-box protein At3g16590 (374 aa).

Residues Met-1 to His-45 form the F-box domain.

The sequence is that of Putative F-box protein At3g16590 from Arabidopsis thaliana (Mouse-ear cress).